The following is a 278-amino-acid chain: HTH-type transcriptional regulator HdfR (278 aa).

One can recognise an HTH lysR-type domain in the interval 1–58; the sequence is MDTELLKTFLEVSRTRHFGRAAEALYLTQSAVSFRIRQLENQLGVNLFTRHRNNIRLT. Positions 18-37 form a DNA-binding region, H-T-H motif; that stretch reads FGRAAEALYLTQSAVSFRIR.

The protein belongs to the LysR transcriptional regulatory family.

Its function is as follows. Negatively regulates the transcription of the flagellar master operon flhDC by binding to the upstream region of the operon. This Salmonella schwarzengrund (strain CVM19633) protein is HTH-type transcriptional regulator HdfR.